Consider the following 75-residue polypeptide: Transaldolase (75 aa).

This sequence belongs to the transaldolase family. Type 1 subfamily. As to quaternary structure, homodimer. Post-translationally, phosphorylated. Predominantly expressed in Y-organs.

It localises to the cytoplasm. It catalyses the reaction D-sedoheptulose 7-phosphate + D-glyceraldehyde 3-phosphate = D-erythrose 4-phosphate + beta-D-fructose 6-phosphate. Its pathway is carbohydrate degradation; pentose phosphate pathway; D-glyceraldehyde 3-phosphate and beta-D-fructose 6-phosphate from D-ribose 5-phosphate and D-xylulose 5-phosphate (non-oxidative stage): step 2/3. Its function is as follows. Transaldolase is important for the balance of metabolites in the pentose-phosphate pathway. May play a role in the conversion of sterols into ecdysteroids via NADPH. The protein is Transaldolase of Carcinus maenas (Common shore crab).